A 796-amino-acid chain; its full sequence is Cadherin-11 (796 aa).

The N-terminal stretch at Met-1–Ala-22 is a signal peptide. Positions Phe-23–Arg-53 are excised as a propeptide. Cadherin domains follow at residues Gly-54 to Phe-159, Leu-160 to Phe-268, Pro-269 to Phe-383, Leu-384 to Pro-486, and Lys-487 to Asn-612. At Gly-54–Thr-617 the chain is on the extracellular side. N-linked (GlcNAc...) asparagine glycosylation is found at Asn-455 and Asn-540. Residues Gly-618–Leu-640 form a helical membrane-spanning segment. Over Arg-641 to Ser-796 the chain is Cytoplasmic. Ser-788 carries the post-translational modification Phosphoserine. Residue Thr-791 is modified to Phosphothreonine.

In terms of assembly, interacts with PCDH8. As to expression, expressed mainly in brain but also found in other tissues. Expressed in neuroblasts. In the embryo from 67 to 72 days of gestation, detected at high levels in facial mesenchyme including the central palatal mesenchyme, dental mesenchyme, the eye and optic muscle, and the tongue (at protein level).

It localises to the cell membrane. Cadherins are calcium-dependent cell adhesion proteins. They preferentially interact with themselves in a homophilic manner in connecting cells; cadherins may thus contribute to the sorting of heterogeneous cell types. Required for proper focal adhesion assembly. Involved in the regulation of cell migration. This is Cadherin-11 (CDH11) from Homo sapiens (Human).